The sequence spans 611 residues: BTB/POZ domain-containing protein 9 (611 aa).

In terms of domain architecture, BTB spans 36–104 (GDVTFVVEKK…IYTGRATLTD (69 aa)). The BACK domain maps to 142 to 240 (VCMTFDVASL…SLTELLNVVR (99 aa)). The interval 560 to 611 (QSAQKDSSDEPGTGGASAAGQQLDPHALQAPSGSSLPSSPGSNSRSPNRQHQ) is disordered. Residues 586–611 (ALQAPSGSSLPSSPGSNSRSPNRQHQ) are compositionally biased toward low complexity.

The chain is BTB/POZ domain-containing protein 9 (BTBD9) from Bos taurus (Bovine).